An 85-amino-acid chain; its full sequence is U4-theraphotoxin-Hhn1f (85 aa).

The signal sequence occupies residues 1–22; that stretch reads MKVTLIAILTCAAVLVLHTTAA. Residues 23-48 constitute a propeptide that is removed on maturation; it reads EELEAESQLMEVGMPDTELAAVDEER. Cys71 and Cys82 are disulfide-bonded.

This sequence belongs to the neurotoxin 12 (Hwtx-2) family. 02 (Hwtx-2) subfamily. In terms of tissue distribution, expressed by the venom gland.

The protein localises to the secreted. Its function is as follows. Postsynaptic neurotoxin. The chain is U4-theraphotoxin-Hhn1f from Cyriopagopus hainanus (Chinese bird spider).